The sequence spans 212 residues: MKLYNFWRSGTSHRLRIALNLKGVPYEYLAVHLGKEEHLKDAFKALNPQQLVPALDTGAQVLIQSPAIIEWLEEQYPTPALLPADADGRQRVRALAAIVGCDIHPINNRRILEYLRKTFGADEAAINAWCGTWISAGFDAYEALLAVDPKRGRYSFGDTPTLADCYLVPQVESARRFQVDLTPYPLIRAVDAACGELDAFRRAAPAAQPDSA.

The GST N-terminal domain occupies 1–80 (MKLYNFWRSG…WLEEQYPTPA (80 aa)). Glutathione contacts are provided by residues 9 to 11 (SGT), His38, Val52, 64 to 65 (QS), 102 to 104 (DIH), 108 to 110 (NRR), and Arg176. Residues 85 to 212 (DADGRQRVRA…AAPAAQPDSA (128 aa)) form the GST C-terminal domain.

It belongs to the GST superfamily. Zeta family. In terms of assembly, homodimer. It depends on glutathione as a cofactor.

It catalyses the reaction 3-maleylpyruvate = 3-fumarylpyruvate. The protein operates within aromatic compound metabolism; naphthalene degradation. Functionally, catalyzes the GSH-dependent isomerization of maleylpyruvate to fumarylpyruvate which is subsequently processed by NagK to form pyruvate and fumarate. The protein is Maleylpyruvate isomerase of Ralstonia sp.